Reading from the N-terminus, the 89-residue chain is Large ribosomal subunit protein bL27 (89 aa).

Residues 1–23 (MAHKKAGGSSRNGRDSESKRLGV) form a disordered region.

Belongs to the bacterial ribosomal protein bL27 family.

The polypeptide is Large ribosomal subunit protein bL27 (Rhizobium meliloti (strain 1021) (Ensifer meliloti)).